The primary structure comprises 1049 residues: Ataxin-2-like protein (1049 aa).

Met1 is modified (N-acetylmethionine). The interval Met1–Ala54 is disordered. Residue Ser27 is modified to Phosphoserine. Thr45 carries the phosphothreonine modification. The interaction with MPL stretch occupies residues Ser96 to Ser119. Phosphoserine is present on Ser109. Position 116 is a phosphotyrosine (Tyr116). Residues Arg120–Asp197 enclose the Sm domain. Residue Lys205 is modified to N6-acetyllysine. Ser236 is subject to Phosphoserine. At Tyr262 the chain carries Phosphotyrosine. At Ser304 the chain carries Phosphoserine. Residue Tyr307 is modified to Phosphotyrosine. Over residues Glu314–Ser326 the composition is skewed to basic and acidic residues. 7 disordered regions span residues Glu314 to Glu522, Gln554 to Arg573, Glu578 to Gly704, Val736 to Gln772, Ser824 to Pro852, His868 to Pro944, and Pro999 to Asn1049. A compositionally biased stretch (polar residues) spans Val328–Leu340. Residues Ser333 and Ser337 each carry the phosphoserine modification. Lys346 participates in a covalent cross-link: Glycyl lysine isopeptide (Lys-Gly) (interchain with G-Cter in SUMO2). Tyr347 is subject to Phosphotyrosine. Asymmetric dimethylarginine is present on Arg359. Over residues Gly361 to Pro378 the composition is skewed to low complexity. Residues Ser389, Ser407, and Ser453 each carry the phosphoserine modification. The span at Pro454 to Cys466 shows a compositional bias: low complexity. A compositionally biased stretch (polar residues) spans Val475–Val487. Residues Ser496 and Ser499 each carry the phosphoserine modification. The segment covering Asp508 to Arg519 has biased composition (basic and acidic residues). Phosphoserine occurs at positions 560, 561, and 562. Over residues Glu578–Asp587 the composition is skewed to basic and acidic residues. Ser597 carries the phosphoserine modification. Residue Thr635 is modified to Phosphothreonine. Residues Ser637, Ser677, Ser683, and Ser687 each carry the phosphoserine modification. The segment covering Ser681–Ser697 has biased composition (low complexity). 2 stretches are compositionally biased toward polar residues: residues Ser824–Gln845 and Gln878–Ala902. Low complexity predominate over residues Ser935–Pro944. Polar residues predominate over residues Gln1033–Leu1042.

The protein belongs to the ataxin-2 family. As to quaternary structure, interacts with MPL/TPOR and EPOR and dissociates after ligand stimulation. Interacts with DDX6, G3BP, and ATXN2. Interacts with PRMT1. Interacts with CIC and ATXN1. Thrombopoietin triggers the phosphorylation on tyrosine residues in a way that is dependent on MPL C-terminal domain. Post-translationally, asymmetrically dimethylated. Probably methylated by PRMT1. As to expression, expressed in cerebellum.

It localises to the membrane. The protein resides in the cytoplasm. Its subcellular location is the nucleus speckle. The protein localises to the cytoplasmic granule. Functionally, involved in the regulation of stress granule and P-body formation. This Mus musculus (Mouse) protein is Ataxin-2-like protein (Atxn2l).